The primary structure comprises 76 residues: Exodeoxyribonuclease 7 small subunit (76 aa).

This sequence belongs to the XseB family. In terms of assembly, heterooligomer composed of large and small subunits.

The protein localises to the cytoplasm. The enzyme catalyses Exonucleolytic cleavage in either 5'- to 3'- or 3'- to 5'-direction to yield nucleoside 5'-phosphates.. Its function is as follows. Bidirectionally degrades single-stranded DNA into large acid-insoluble oligonucleotides, which are then degraded further into small acid-soluble oligonucleotides. The chain is Exodeoxyribonuclease 7 small subunit from Geobacter metallireducens (strain ATCC 53774 / DSM 7210 / GS-15).